A 199-amino-acid chain; its full sequence is uncharacterized protein (199 aa).

A run of 4 helical transmembrane segments spans residues 35–55, 57–77, 94–114, and 131–151; these read CELA…IFYD, FVIF…YLEF, LSAA…IFFG, and YYGC…ASFA.

It is found in the membrane. This is an uncharacterized protein from Caenorhabditis elegans.